The chain runs to 295 residues: Glycine N-methyltransferase (295 aa).

Residues Ser4 and Tyr6 each coordinate (6S)-5-methyl-5,6,7,8-tetrahydrofolate. Ser10 bears the Phosphoserine mark. S-adenosyl-L-methionine is bound by residues Tyr22, Trp31, Tyr34, and Arg41. Tyr34 is subject to Phosphotyrosine. Position 46 is an N6-succinyllysine (Lys46). S-adenosyl-L-methionine-binding positions include Ala65, 86-88 (DAS), 117-118 (NW), 139-142 (LGNS), and Arg178. An N6-succinyllysine mark is found at Lys193, Lys198, and Lys203. A (6S)-5-methyl-5,6,7,8-tetrahydrofolate-binding site is contributed by His217. An S-adenosyl-L-methionine-binding site is contributed by Tyr223. Arg242 serves as a coordination point for (6S)-5-methyl-5,6,7,8-tetrahydrofolate.

This sequence belongs to the class I-like SAM-binding methyltransferase superfamily. Glycine N-methyltransferase family. Homotetramer. As to expression, abundant in liver.

The protein resides in the cytoplasm. The catalysed reaction is glycine + S-adenosyl-L-methionine = sarcosine + S-adenosyl-L-homocysteine + H(+). With respect to regulation, inhibited by 5-methyltetrahydrofolate monoglutamate and by 5-methyltetrahydrofolate pentaglutamate, inhibition is much more effective by the pentaglutamate form than by the monoglutamate form. Two molecules of 5-methyltetrahydrofolate are bound per tetramer. The binding sites are localized between subunits. Inhibitor binding may preclude movements of the polypeptide chain that are necessary for enzyme activity. Functionally, catalyzes the methylation of glycine by using S-adenosylmethionine (AdoMet) to form N-methylglycine (sarcosine) with the concomitant production of S-adenosylhomocysteine (AdoHcy), a reaction regulated by the binding of 5-methyltetrahydrofolate. Plays an important role in the regulation of methyl group metabolism by regulating the ratio between S-adenosyl-L-methionine and S-adenosyl-L-homocysteine. In Oryctolagus cuniculus (Rabbit), this protein is Glycine N-methyltransferase (GNMT).